A 358-amino-acid chain; its full sequence is Transmembrane protein 144 homolog B (358 aa).

A run of 10 helical transmembrane segments spans residues 6–26 (VIGY…YVPV), 35–55 (LAFT…AMFI), 60–79 (IFDP…NFCV), 86–108 (IGIG…FTGK), 122–142 (PALN…FFFI), 211–231 (ILGI…MVPM), 244–264 (LSFV…VFIV), 279–299 (IFPS…LMVA), 307–327 (IGFP…SVFY), and 337–357 (LLIL…LALS).

The protein belongs to the TMEM144 family.

Its subcellular location is the membrane. The protein is Transmembrane protein 144 homolog B (tmem144B) of Dictyostelium discoideum (Social amoeba).